The primary structure comprises 1388 residues: Rho-associated protein kinase 2 (1388 aa).

Residues 1–24 are disordered; it reads MSRPPPTGKMPGAPEAVSGDGAGA. The Protein kinase domain maps to 92–354; it reads YDVVKVIGRG…VEEIKQHPFF (263 aa). Residues 98 to 106 and lysine 121 each bind ATP; that span reads IGRGAFGEV. Catalysis depends on aspartate 214, which acts as the Proton acceptor. One can recognise an AGC-kinase C-terminal domain in the interval 357 to 425; sequence DQWNWDNIRE…YRENLLLSDS (69 aa). The segment at 363 to 784 is interaction with PPP1R12A; it reads NIRETAAPVV…INELLKQKDV (422 aa). The interaction with NPM1 stretch occupies residues 373–420; that stretch reads PELSSDIDSSNFDDIEDDKGDVETFPIPKAFVGNQLPFIGFTYYRENL. Threonine 414 carries the phosphothreonine; by ROCK2 modification. Coiled-coil stretches lie at residues 439-1025 and 1053-1131; these read NEES…KQLL and DTDV…IGLD. The REM-1 domain maps to 497 to 573; sequence TLRQLEREKA…LDETNALLRT (77 aa). A compositionally biased stretch (basic and acidic residues) spans 512 to 530; it reads NAEYQRKADHEADKKRNLE. Residues 512–532 form a disordered region; that stretch reads NAEYQRKADHEADKKRNLEND. The residue at position 722 (tyrosine 722) is a Phosphotyrosine; by SRC. Residues 979 to 1047 form the RhoBD domain; it reads TSDVANLANE…LAEIMNRKEP (69 aa). Residues 979–1047 are RHOA binding; it reads TSDVANLANE…LAEIMNRKEP (69 aa). Serine 1137 bears the Phosphoserine mark. One can recognise a PH domain in the interval 1150 to 1349; it reads ESRLEGWLSL…WVSRLVKKIP (200 aa). Phosphothreonine is present on threonine 1212. Residues 1260–1315 form a Phorbol-ester/DAG-type zinc finger; that stretch reads GHEFIPTLYHFPTNCEACMKPLWHMFKPPPALECRRCHIKCHKDHMDKKEEIIAPC. The disordered stretch occupies residues 1345-1388; the sequence is VKKIPKKPPAPDPFARSSPRTSMKIQQNQSIRRPSRQLAPNKPS. Phosphoserine occurs at positions 1362 and 1374. Residues 1362–1376 are compositionally biased toward polar residues; the sequence is SPRTSMKIQQNQSIR.

The protein belongs to the protein kinase superfamily. AGC Ser/Thr protein kinase family. As to quaternary structure, homodimer. Interacts with IRS1. Interacts with RAF1. Interacts with RHOA (activated by GTP). Interacts with RHOB and RHOC. Interacts with PPP1R12A. Interacts with EP300. Interacts with CHORDC1. Interacts with BRCA2. Interacts with NPM1; this interaction enhances ROCK2 activity. Interacts with SORL1. Interacts with PJVK. Requires Mg(2+) as cofactor. Post-translationally, autophosphorylated. Phosphorylation at Tyr-722 reduces its binding to RHOA and is crucial for focal adhesion dynamics. Dephosphorylation by PTPN11 stimulates its RHOA binding activity. In terms of processing, cleaved by granzyme B during apoptosis. This leads to constitutive activation of the kinase and membrane blebbing. In terms of tissue distribution, highly expressed in whole brain and in cerebellum, and at lower levels in heart and lung. Detected at low levels in skeletal muscle, spleen, liver, kidney and pancreas.

It localises to the cytoplasm. Its subcellular location is the cell membrane. The protein resides in the nucleus. It is found in the cytoskeleton. The protein localises to the microtubule organizing center. It localises to the centrosome. It carries out the reaction L-seryl-[protein] + ATP = O-phospho-L-seryl-[protein] + ADP + H(+). The enzyme catalyses L-threonyl-[protein] + ATP = O-phospho-L-threonyl-[protein] + ADP + H(+). Activated by RHOA binding. Inhibited by Y-27632. In terms of biological role, protein kinase which is a key regulator of actin cytoskeleton and cell polarity. Involved in regulation of smooth muscle contraction, actin cytoskeleton organization, stress fiber and focal adhesion formation, neurite retraction, cell adhesion and motility via phosphorylation of ADD1, BRCA2, CNN1, EZR, DPYSL2, EP300, MSN, MYL9/MLC2, NPM1, RDX, PPP1R12A and VIM. Phosphorylates SORL1 and IRF4. Acts as a negative regulator of VEGF-induced angiogenic endothelial cell activation. Positively regulates the activation of p42/MAPK1-p44/MAPK3 and of p90RSK/RPS6KA1 during myogenic differentiation. Plays an important role in the timely initiation of centrosome duplication. Inhibits keratinocyte terminal differentiation. May regulate closure of the eyelids and ventral body wall through organization of actomyosin bundles. Plays a critical role in the regulation of spine and synaptic properties in the hippocampus. Plays an important role in generating the circadian rhythm of the aortic myofilament Ca(2+) sensitivity and vascular contractility by modulating the myosin light chain phosphorylation. In Bos taurus (Bovine), this protein is Rho-associated protein kinase 2 (ROCK2).